A 265-amino-acid polypeptide reads, in one-letter code: Phosphatidylserine decarboxylase proenzyme (265 aa).

Active-site charge relay system; for autoendoproteolytic cleavage activity residues include aspartate 86, histidine 142, and serine 226. The active-site Schiff-base intermediate with substrate; via pyruvic acid; for decarboxylase activity is serine 226. Position 226 is a pyruvic acid (Ser); by autocatalysis (serine 226).

This sequence belongs to the phosphatidylserine decarboxylase family. PSD-B subfamily. Prokaryotic type I sub-subfamily. Heterodimer of a large membrane-associated beta subunit and a small pyruvoyl-containing alpha subunit. Requires pyruvate as cofactor. In terms of processing, is synthesized initially as an inactive proenzyme. Formation of the active enzyme involves a self-maturation process in which the active site pyruvoyl group is generated from an internal serine residue via an autocatalytic post-translational modification. Two non-identical subunits are generated from the proenzyme in this reaction, and the pyruvate is formed at the N-terminus of the alpha chain, which is derived from the carboxyl end of the proenzyme. The autoendoproteolytic cleavage occurs by a canonical serine protease mechanism, in which the side chain hydroxyl group of the serine supplies its oxygen atom to form the C-terminus of the beta chain, while the remainder of the serine residue undergoes an oxidative deamination to produce ammonia and the pyruvoyl prosthetic group on the alpha chain. During this reaction, the Ser that is part of the protease active site of the proenzyme becomes the pyruvoyl prosthetic group, which constitutes an essential element of the active site of the mature decarboxylase.

The protein localises to the cell membrane. The enzyme catalyses a 1,2-diacyl-sn-glycero-3-phospho-L-serine + H(+) = a 1,2-diacyl-sn-glycero-3-phosphoethanolamine + CO2. The protein operates within phospholipid metabolism; phosphatidylethanolamine biosynthesis; phosphatidylethanolamine from CDP-diacylglycerol: step 2/2. Catalyzes the formation of phosphatidylethanolamine (PtdEtn) from phosphatidylserine (PtdSer). The chain is Phosphatidylserine decarboxylase proenzyme from Anoxybacillus flavithermus (strain DSM 21510 / WK1).